The primary structure comprises 340 residues: Heat-inducible transcription repressor HrcA (340 aa).

It belongs to the HrcA family.

In terms of biological role, negative regulator of class I heat shock genes (grpE-dnaK-dnaJ and groELS operons). Prevents heat-shock induction of these operons. This is Heat-inducible transcription repressor HrcA from Mycoplasma capricolum subsp. capricolum (strain California kid / ATCC 27343 / NCTC 10154).